The following is a 217-amino-acid chain: Ribonuclease HII 2 (217 aa).

One can recognise an RNase H type-2 domain in the interval 28–217 (GLLAGVDEAG…VREVLLERRP (190 aa)). A divalent metal cation contacts are provided by Asp34, Glu35, and Asp126.

Belongs to the RNase HII family. The cofactor is Mn(2+). Mg(2+) is required as a cofactor.

The protein resides in the cytoplasm. It catalyses the reaction Endonucleolytic cleavage to 5'-phosphomonoester.. In terms of biological role, endonuclease that specifically degrades the RNA of RNA-DNA hybrids. This chain is Ribonuclease HII 2, found in Methylibium petroleiphilum (strain ATCC BAA-1232 / LMG 22953 / PM1).